Reading from the N-terminus, the 424-residue chain is MFLLPRFILVSCIIGSLGFYNPPTNVVSHVNGDWFLFGDSRSDCNHIVNINPHNYSYMDLNPVLCDSGKISSKAGNSIFRSFHFTDFYNYTGEGQQIIFYEGVNFTPYHAFKCNRSGSNDIWMQNKGLFYTQVYKNMAVYRSLTFVNVPYVYNGSAQSTALCKSGSLVLNNPAYIAPQANSGDYYYKVEADFYLSGCDEYIVPLCIFNGKFLSNTKYYDDSQYYFNKDTGVIYGLNSTETITTGFDLNCYYLVLPSGNYLAISNELLLTVPTKAICLNKRKDFTPVQVVDSRWNNARQSDNMTAVACQPPYCYFRNSTTNYVGVYDINHGDAGFTSILSGLLYNSPCFSQQGVFRYDNVSSVWPLYPYGRCPTAADINNPDLPICVYDPLPVILLGILLGVAVIIIVVLLLYFMVDNGTRLHDA.

A signal peptide spans 1 to 16 (MFLLPRFILVSCIIGS). The segment at 7-127 (FILVSCIIGS…SNDIWMQNKG (121 aa)) is esterase domain 1. Residues 17–392 (LGFYNPPTNV…PICVYDPLPV (376 aa)) lie on the Virion surface side of the membrane. Serine 40 (nucleophile) is an active-site residue. An intrachain disulfide couples cysteine 44 to cysteine 65. Residues asparagine 54, asparagine 89, asparagine 114, asparagine 153, asparagine 236, and asparagine 301 are each glycosylated (N-linked (GlcNAc...) asparagine; by host). Disulfide bonds link cysteine 113–cysteine 162, cysteine 197–cysteine 276, and cysteine 205–cysteine 249. Residues 128–266 (LFYTQVYKNM…GNYLAISNEL (139 aa)) form a receptor binding region. The interval 267–379 (LLTVPTKAIC…RCPTAADINN (113 aa)) is esterase domain 2. A disulfide bridge connects residues cysteine 307 and cysteine 312. An N-linked (GlcNAc...) asparagine; by host glycan is attached at asparagine 316. Residues aspartate 326 and histidine 329 each act as charge relay system in the active site. The cysteines at positions 347 and 371 are disulfide-linked. An N-linked (GlcNAc...) asparagine; by host glycan is attached at asparagine 358. The chain crosses the membrane as a helical span at residues 393–413 (ILLGILLGVAVIIIVVLLLYF). Residues 414 to 424 (MVDNGTRLHDA) are Intravirion-facing. Asparagine 417 carries an N-linked (GlcNAc...) asparagine; by host glycan.

It belongs to the influenza type C/coronaviruses hemagglutinin-esterase family. As to quaternary structure, homodimer; disulfide-linked. Forms a complex with the M protein in the pre-Golgi. Associates then with S-M complex to form a ternary complex S-M-HE. Post-translationally, N-glycosylated in the host RER.

Its subcellular location is the virion membrane. It is found in the host cell membrane. The catalysed reaction is N-acetyl-9-O-acetylneuraminate + H2O = N-acetylneuraminate + acetate + H(+). It catalyses the reaction N-acetyl-4-O-acetylneuraminate + H2O = N-acetylneuraminate + acetate + H(+). Functionally, structural protein that makes short spikes at the surface of the virus. Contains receptor binding and receptor-destroying activities. Mediates de-O-acetylation of N-acetyl-4-O-acetylneuraminic acid, which is probably the receptor determinant recognized by the virus on the surface of erythrocytes and susceptible cells. This receptor-destroying activity is important for virus release as it probably helps preventing self-aggregation and ensures the efficient spread of the progeny virus from cell to cell. May serve as a secondary viral attachment protein for initiating infection, the spike protein being the major one. May become a target for both the humoral and the cellular branches of the immune system. The sequence is that of Hemagglutinin-esterase from Homo sapiens (Human).